A 799-amino-acid polypeptide reads, in one-letter code: ATP-dependent DNA helicase Hel308 (799 aa).

Residues Gln29 and 47–54 (IPTASGKT) contribute to the ATP site. One can recognise a Helicase ATP-binding domain in the interval 34–200 (EAGVTEGENL…WLDAGLVDSD (167 aa)). A DEAH box motif is present at residues 145-148 (DEVH). The Helicase C-terminal domain maps to 234 to 435 (QTAAIVRDTL…EPALRTHILA (202 aa)). 2 disordered regions span residues 522–566 (RGAS…DRDP) and 750–799 (NVLE…LGDF). Positions 553-566 (LAEDADESDADRDP) are enriched in acidic residues.

It belongs to the helicase family. Hel308 subfamily. In terms of assembly, monomer.

It carries out the reaction Couples ATP hydrolysis with the unwinding of duplex DNA by translocating in the 3'-5' direction.. It catalyses the reaction ATP + H2O = ADP + phosphate + H(+). DNA-dependent ATPase and 3'-5' DNA helicase that may be involved in repair of stalled replication forks. This chain is ATP-dependent DNA helicase Hel308, found in Haloarcula marismortui (strain ATCC 43049 / DSM 3752 / JCM 8966 / VKM B-1809) (Halobacterium marismortui).